Here is a 544-residue protein sequence, read N- to C-terminus: Zinc finger protein 502 (544 aa).

A Glycyl lysine isopeptide (Lys-Gly) (interchain with G-Cter in SUMO2) cross-link involves residue lysine 43. C2H2-type zinc fingers lie at residues 155–177 (WKCN…QRTH), 183–205 (YTCE…QRIH), 211–233 (YGCE…QRIH), 239–261 (YKCN…QRIH), 267–289 (YKCN…QRIH), 295–317 (YICS…QRIH), 323–345 (HKCD…QRIH), 351–373 (YKCK…QRIH), 379–401 (YKCK…QRIH), 407–429 (YKCS…QRSH), 435–457 (YKCN…MRIH), 463–485 (YKCK…HRTH), 491–513 (YKCS…YRIH), and 519–541 (YECI…QKLH).

It belongs to the krueppel C2H2-type zinc-finger protein family. As to quaternary structure, (Microbial infection) Interacts with human respiratory syncytial virus (HRSV) matrix protein; this interaction probably facilitates viral release.

The protein localises to the nucleus. Its function is as follows. May be involved in transcriptional regulation. This chain is Zinc finger protein 502 (ZNF502), found in Homo sapiens (Human).